A 419-amino-acid chain; its full sequence is Serine hydroxymethyltransferase (419 aa).

Residues leucine 121 and glycine 125 to leucine 127 each bind (6S)-5,6,7,8-tetrahydrofolate. Lysine 229 carries the post-translational modification N6-(pyridoxal phosphate)lysine. Position 354 to 356 (serine 354 to phenylalanine 356) interacts with (6S)-5,6,7,8-tetrahydrofolate.

The protein belongs to the SHMT family. Homodimer. Requires pyridoxal 5'-phosphate as cofactor.

The protein localises to the cytoplasm. The enzyme catalyses (6R)-5,10-methylene-5,6,7,8-tetrahydrofolate + glycine + H2O = (6S)-5,6,7,8-tetrahydrofolate + L-serine. It participates in one-carbon metabolism; tetrahydrofolate interconversion. It functions in the pathway amino-acid biosynthesis; glycine biosynthesis; glycine from L-serine: step 1/1. Functionally, catalyzes the reversible interconversion of serine and glycine with tetrahydrofolate (THF) serving as the one-carbon carrier. This reaction serves as the major source of one-carbon groups required for the biosynthesis of purines, thymidylate, methionine, and other important biomolecules. Also exhibits THF-independent aldolase activity toward beta-hydroxyamino acids, producing glycine and aldehydes, via a retro-aldol mechanism. The sequence is that of Serine hydroxymethyltransferase from Coxiella burnetii (strain RSA 493 / Nine Mile phase I).